Here is a 542-residue protein sequence, read N- to C-terminus: MVVSREEVREIIGRGNAIVIYEDHLLNLNGWLERHPGGEKAIHHMIGRDASDEMNAYHDPETVKTFKRWSIGRVKLPWDNLVPPIQGGNYSFDKVDQRVIYKKLGIFPGVKIEPKVQENIVLTEKSASKLLPVGGVRDPKTIIEDFDNKLVYEDIKQIPSLDHETQRNLSLQYNELHQTIINRGYYQCDYWQYFKEFCRISSLFLLFVLFLRSKWYTLSAISIGLMWQQLVFIAHDAGHISITHNYQIDNIIGIIIANFIGGLSLGWWKRNHNVHHLVTNDPVHDPDIQHLPFFAVSSRLLGNVFSTYYEKYLWFDKIAQKMLQIQHKLYYPILSFGRFNLYRLSWSHLIMGLGPRKGKAAWFRYLELIGLCFFSYWFFYKTMSYIPTKTLRFWFLLISHWTTMIVHVQIVLSHFAMSTSDLGSTESFVSRQLRTTMDVDCPEWFDFFHGGLQFQAIHHLFPRLPRHNFRKVQPLVIEFCKNTGLHYSIYGFVDGNGKVVNKMADVASQVVILNDCLHSIHLENTTGKNLYEAKVESVSIKG.

Residues 1 to 75 form the Cytochrome b5 heme-binding domain; that stretch reads MVVSREEVRE…FKRWSIGRVK (75 aa). Histidine 35 and histidine 58 together coordinate heme. 2 consecutive transmembrane segments (helical) span residues 215–235 and 248–268; these read WYTL…FIAH and IDNI…LGWW. The Histidine box-1 motif lies at 235–239; it reads HDAGH. A Histidine box-2 motif is present at residues 272-276; sequence HNVHH. Transmembrane regions (helical) follow at residues 329 to 346, 360 to 380, and 393 to 413; these read LYYP…RLSW, AAWF…WFFY, and FWFL…IVLS. Positions 455–459 match the Histidine box-3 motif; sequence QAIHH.

The protein belongs to the fatty acid desaturase type 1 family.

Its subcellular location is the membrane. The catalysed reaction is an N-acylsphing-4-enine + 2 Fe(II)-[cytochrome b5] + O2 + 2 H(+) = a (4E,8E)-4-sphinga-4,8-dienine ceramide + 2 Fe(III)-[cytochrome b5] + 2 H2O. It participates in lipid metabolism; sphingolipid metabolism. Functionally, delta(8)-fatty-acid desaturase which introduces a double bond at the 8-position in the long-chain base (LCB) of ceramides. Required for the formation of the di-unsaturated sphingoid base (E,E)-sphinga-4,8-dienine during glucosylceramide (GluCer) biosynthesis. This Komagataella phaffii (strain GS115 / ATCC 20864) (Yeast) protein is Delta 8-(E)-sphingolipid desaturase.